A 498-amino-acid polypeptide reads, in one-letter code: Acetylcholine receptor subunit alpha-type acr-16 (498 aa).

The first 19 residues, 1–19, serve as a signal peptide directing secretion; that stretch reads MSVCTLLISCAILAAPTLG. Over 20–230 the chain is Extracellular; that stretch reads SLQERRLYED…FYLHMRRRTL (211 aa). Residues N43 and N93 are each glycosylated (N-linked (GlcNAc...) asparagine). Disulfide bonds link C147–C161 and C211–C212. Transmembrane regions (helical) follow at residues 231–252, 261–279, and 295–314; these read YYGF…LGFT, ITLQ…SIVS, and FFTC…VYVL. Residues 315-472 lie on the Cytoplasmic side of the membrane; it reads NLHYRTPETH…WKFAAMVVDR (158 aa). A helical transmembrane segment spans residues 473–493; it reads LCLYVFTIFIIVSTIGIFWSA.

Belongs to the ligand-gated ion channel (TC 1.A.9) family. Acetylcholine receptor (TC 1.A.9.1) subfamily. In terms of tissue distribution, expressed in the body wall muscle.

The protein resides in the postsynaptic cell membrane. Its subcellular location is the cell membrane. Its function is as follows. After binding acetylcholine, the AChR responds by an extensive change in conformation that affects all subunits and leads to opening of an ion-conducting channel across the plasma membrane. A subunit of the levamisole-insensitive nicotinic receptor. The protein is Acetylcholine receptor subunit alpha-type acr-16 (acr-16) of Caenorhabditis elegans.